The primary structure comprises 638 residues: MAKVIGIDLGTTNSCIAIMDGKEPKVIENAEGARTTPSIVAISGDGERLVGQPAKRQAVTNPENTIFAVKRLIGRRYDDPVTEKDKKLVPYKIVKGDNGDAWVEAGGKKQSPSQISAMILQKMKETAEAYLGEKVEKAVITVPAYFNDAQRQATKDAGKIAGLEVLRIINEPTAAALAYGLDKKDGKTIAVYDLGGGTFDISVLEIGDGVFEVKSTNGDTFLGGEDFDMRLVEYLAAEFKKEQGIDLKNDKLALQRLKEAAEKAKIELSSTTQTEINLPFITADATGPKHLTLKLTRAKFESLVEDLVQRTIDPCKAALKDAGLKAGEIDEVVLVGGMTRMPKIQEIVKQFFGKEPHKGVNPDEVVALGAAIQAGVLQGDVKDVLLLDVTPLSLGIETLGGVFTRLIERNTTIPTKKSQVFSTAEDSQSAVTIRVFQGEREMAADNKALGQFDLVGIPPAPRGVPQIEVTFDIDANGIVNVSAKDKGTGKEHQIRIQASGGLSDADIEKMVKDAEANAETDKKRRAVVEARNQAEALVHSSEKSLKEYGDKVSEAERTAISDAIAALKTAAEGDDAADIEAKSQALAEASMKLGQAMYEASQKEAAEADAKADAAKDSDVVDADFEEIDEDDDKKKSA.

Phosphothreonine; by autocatalysis is present on T198. A disordered region spans residues 598–638 (YEASQKEAAEADAKADAAKDSDVVDADFEEIDEDDDKKKSA). Residues 601-619 (SQKEAAEADAKADAAKDSD) show a composition bias toward basic and acidic residues. A compositionally biased stretch (acidic residues) spans 620-632 (VVDADFEEIDEDD).

Belongs to the heat shock protein 70 family.

Acts as a chaperone. The polypeptide is Chaperone protein DnaK (Mesorhizobium japonicum (strain LMG 29417 / CECT 9101 / MAFF 303099) (Mesorhizobium loti (strain MAFF 303099))).